A 183-amino-acid polypeptide reads, in one-letter code: GMP synthase [glutamine-hydrolyzing] subunit A (183 aa).

The Glutamine amidotransferase type-1 domain occupies 2–183; it reads KIYVIYNYGQ…YRNFIEICKK (182 aa). Cysteine 74 (nucleophile) is an active-site residue. Residues histidine 161 and glutamate 163 contribute to the active site.

In terms of assembly, heterodimer composed of a glutamine amidotransferase subunit (A) and a GMP-binding subunit (B).

It catalyses the reaction XMP + L-glutamine + ATP + H2O = GMP + L-glutamate + AMP + diphosphate + 2 H(+). Its pathway is purine metabolism; GMP biosynthesis; GMP from XMP (L-Gln route): step 1/1. In terms of biological role, catalyzes the synthesis of GMP from XMP. The polypeptide is GMP synthase [glutamine-hydrolyzing] subunit A (Archaeoglobus fulgidus (strain ATCC 49558 / DSM 4304 / JCM 9628 / NBRC 100126 / VC-16)).